A 334-amino-acid polypeptide reads, in one-letter code: Malate dehydrogenase 2 (334 aa).

19 to 25 (IGAGKVG) lines the NAD(+) pocket. Substrate is bound by residues Arg100 and Arg106. NAD(+)-binding positions include Asn113 and 136–138 (VSN). Asn138 and Arg169 together coordinate substrate. His193 (proton acceptor) is an active-site residue.

It belongs to the LDH/MDH superfamily.

It catalyses the reaction (S)-malate + NAD(+) = oxaloacetate + NADH + H(+). Functionally, catalyzes the reversible oxidation of malate to oxaloacetate. The chain is Malate dehydrogenase 2 from Aquifex aeolicus (strain VF5).